Consider the following 469-residue polypeptide: SSLSVLVLSLSFAYCLSAPVPQDEDSELTPGDLQLAEHYLNRLYSSSSNPVGMLRMKNVNSIETKLKEMQSFFGLEVTGKLNEDTLDIMKQPRCGVPDVGQYNFFPRKLKWPRNNLTYRIVNYTPDLSTSEVDRAIKKALKVWSDVTPLNFTRLRTGTADIMVSFGKKEHGDYYPFDGPDGLLAHAFPPGEKLGGDTHFDDDEMFSTDNKGYNLFVVAAHEFGHALGLDHSRDPGSLMFPVYTYTETSRFVLPDDDVQGIQVLYGPGNRDPHPKHPKTPEKCDPDLSIDAITELRGEKMIFKDRFFWRVHPQMTDAELVLIKSFWPELPNKLDAAYEHPAKDLSYLFRGKKFWALNGYDIVEDYPKKLHELGFPKTLKAIDAAVYNKDTGKTFFFTEDSYWSFDEEARTLDKGFPRLISEDFPGIGEKVDAAYQRNGYLYFFNGALQFEYSIWSQRITRILKTNFVLMC.

An N-terminal signal peptide occupies residues 1–17 (SSLSVLVLSLSFAYCLS). A propeptide spans 18–100 (APVPQDEDSE…QPRCGVPDVG (83 aa)) (activation peptide). A Cysteine switch motif is present at residues 92–99 (PRCGVPDV). Residue C94 coordinates Zn(2+). An N-linked (GlcNAc...) asparagine glycan is attached at N115. Ca(2+) is bound at residue D126. A glycan (N-linked (GlcNAc...) asparagine) is linked at N150. Residue D160 participates in Ca(2+) binding. Zn(2+)-binding residues include H170 and D172. Ca(2+) contacts are provided by D177, G178, and L182. H185 lines the Zn(2+) pocket. Positions 194 and 196 each coordinate Ca(2+). Residue H198 coordinates Zn(2+). Ca(2+) is bound by residues D200, D201, and E203. H220 serves as a coordination point for Zn(2+). E221 is an active-site residue. Zn(2+) is bound by residues H224, H230, and M238. The tract at residues 266 to 469 (PGNRDPHPKH…ILKTNFVLMC (204 aa)) is interaction with collagen. Hemopexin repeat units follow at residues 279–328 (PEKC…WPEL), 329–375 (PNKL…GFPK), 377–425 (LKAI…FPGI), and 426–469 (GEKV…VLMC). An intrachain disulfide couples C282 to C469. Ca(2+) contacts are provided by D289, I291, D333, A335, A383, and D430.

Belongs to the peptidase M10A family. The cofactor is Ca(2+). It depends on Zn(2+) as a cofactor. Post-translationally, the proenzyme is activated by removal of the propeptide; this cleavage can be effected by other matrix metalloproteinases and may involve several cleavage steps. Cleavage can also be autocatalytic, after partial maturation by another protease or after treatment with 4-aminophenylmercuric acetate (APMA) (in vitro).

It localises to the secreted. The protein resides in the extracellular space. It is found in the extracellular matrix. In terms of biological role, plays a role in the degradation of extracellular matrix proteins including fibrillar collagen, fibronectin, TNC and ACAN. Cleaves several types of triple helical collagen. May also function by activating or degrading key regulatory proteins. Plays a role in wound healing, tissue remodeling, cartilage degradation, bone development, bone mineralization and ossification. The protein is Collagenase 3 (mmp13) of Xenopus laevis (African clawed frog).